Consider the following 218-residue polypeptide: Small ribosomal subunit protein uS3c (218 aa).

Positions 47–118 (VQKNMRTSSG…KLNIAVTRIA (72 aa)) constitute a KH type-2 domain.

This sequence belongs to the universal ribosomal protein uS3 family. Part of the 30S ribosomal subunit.

The protein resides in the plastid. Its subcellular location is the chloroplast. The sequence is that of Small ribosomal subunit protein uS3c (rps3) from Nicotiana sylvestris (Wood tobacco).